Reading from the N-terminus, the 497-residue chain is Xylooligosaccharide oxidase (497 aa).

Residues M1–A16 form the signal peptide. The cysteines at positions 30 and 79 are disulfide-linked. N42 and N117 each carry an N-linked (GlcNAc...) asparagine glycan. Residues L57 to A230 form the FAD-binding PCMH-type domain. The segment at residues H94–C155 is a cross-link (6-(S-cysteinyl)-8alpha-(pros-histidyl)-FAD (His-Cys)). T154 contacts substrate. 3 N-linked (GlcNAc...) asparagine glycosylation sites follow: N192, N233, and N245. R272 is a substrate binding site. Residues N289 and N307 are each glycosylated (N-linked (GlcNAc...) asparagine). E412 and Y451 together coordinate substrate.

Belongs to the oxygen-dependent FAD-linked oxidoreductase family. FAD is required as a cofactor. Post-translationally, the FAD cofactor is bound via a bicovalent 6-S-cysteinyl, 8alpha-N1-histidyl FAD linkage.

The protein localises to the secreted. It carries out the reaction D-xylobiose + O2 = D-xylobiono-1,5-lactone + H2O2. It catalyses the reaction D-xylotriose + O2 = D-xylotriono-1,5-lactone + H2O2. The enzyme catalyses D-xylotetraose + O2 = D-xylotetraono-1,5-lactone + H2O2. Functionally, catalyzes the selective oxidation of C1 hydroxyl moieties on mono-, oligo- and polysaccharides with concomitant reduction of molecular oxygen to hydrogen peroxide. This results in the formation of the corresponding lactones, which typically undergo spontaneous hydrolysis. Xylooligosaccharide oxidase is able to oxidize a variety of substrates including D-xylose, D-cellobiose, lactose and arabinose. The enzyme acts primarily on xylooligosaccharides, indicating that it prefers pentose-based oligosaccharides over hexose-based oligosaccharides. The protein is Xylooligosaccharide oxidase of Thermothelomyces thermophilus (strain ATCC 42464 / BCRC 31852 / DSM 1799) (Sporotrichum thermophile).